Here is a 606-residue protein sequence, read N- to C-terminus: Maternal effect protein oskar (606 aa).

Positions E152–A221 constitute an HTH OST-type domain. 2 positions are modified to phosphoserine: S270 and S275. The tract at residues L425 to L439 is leucine-zipper.

In terms of assembly, interacts with smaug (smg). Interacts with yl/yolkless. As to expression, begins to accumulate at the posterior pole of the oocyte from stage 8 onwards.

It localises to the endosome. In terms of biological role, organizes the germ plasm and directs localization of the posterior determinant nanos. Oskar protein is required to keep nanos (nos) RNA and staufen protein at the posterior pole. This chain is Maternal effect protein oskar (osk), found in Drosophila melanogaster (Fruit fly).